The following is a 680-amino-acid chain: Transketolase 1 (680 aa).

His30 is a binding site for substrate. Thiamine diphosphate contacts are provided by residues His69 and 116–118; that span reads GPL. Asp157 is a Mg(2+) binding site. Thiamine diphosphate contacts are provided by Gly158 and Asn187. Asn187 and Ile189 together coordinate Mg(2+). His263 serves as a coordination point for substrate. His263 lines the thiamine diphosphate pocket. Phosphoserine is present on residues Ser286 and Ser335. Substrate contacts are provided by Arg359 and Ser386. Ser402 carries the phosphoserine modification. Glu418 and Phe445 together coordinate thiamine diphosphate. Glu418 serves as the catalytic Proton donor. Residues His469 and Asp477 each coordinate substrate. At Ser492 the chain carries Phosphoserine. Arg528 serves as a coordination point for substrate. A Glycyl lysine isopeptide (Lys-Gly) (interchain with G-Cter in ubiquitin) cross-link involves residue Lys647.

It belongs to the transketolase family. Homodimer. The cofactor is Mg(2+). Ca(2+) is required as a cofactor. Requires Mn(2+) as cofactor. Co(2+) serves as cofactor. It depends on thiamine diphosphate as a cofactor.

It catalyses the reaction D-sedoheptulose 7-phosphate + D-glyceraldehyde 3-phosphate = aldehydo-D-ribose 5-phosphate + D-xylulose 5-phosphate. Catalyzes the transfer of a two-carbon ketol group from a ketose donor to an aldose acceptor, via a covalent intermediate with the cofactor thiamine pyrophosphate. This is Transketolase 1 (TKL1) from Saccharomyces cerevisiae (strain ATCC 204508 / S288c) (Baker's yeast).